Reading from the N-terminus, the 344-residue chain is Ribosomal RNA small subunit methyltransferase H 2 (344 aa).

S-adenosyl-L-methionine is bound by residues 78-80 (GGH), aspartate 98, phenylalanine 131, aspartate 145, and glutamine 152.

Belongs to the methyltransferase superfamily. RsmH family.

It is found in the cytoplasm. The enzyme catalyses cytidine(1402) in 16S rRNA + S-adenosyl-L-methionine = N(4)-methylcytidine(1402) in 16S rRNA + S-adenosyl-L-homocysteine + H(+). Specifically methylates the N4 position of cytidine in position 1402 (C1402) of 16S rRNA. The protein is Ribosomal RNA small subunit methyltransferase H 2 of Acholeplasma laidlawii (strain PG-8A).